We begin with the raw amino-acid sequence, 257 residues long: E3 ubiquitin-protein ligase RNF170 (257 aa).

Residues 1–24 lie on the Lumenal side of the membrane; the sequence is MADNQEERPHFPLDEGSIIEGVSD. The chain crosses the membrane as a helical span at residues 25-45; it reads QVIVVVLLSFVAVGSLIYLLL. Residues 46–200 are Cytoplasmic-facing; sequence RNDEQNIHPE…GGLFWMFRIR (155 aa). Residues 87-130 form an RING-type zinc finger; sequence CPVCLQQATFPVETNCGHLFCGSCIIAYWRYGTWLGAINCPICR. A helical transmembrane segment spans residues 201–221; it reads IVLCLLGALLYLVSPLDIIPE. Residue Ala222 is a topological domain, lumenal. A helical membrane pass occupies residues 223-243; that stretch reads LFGILGFLDDLFVLFLLLIYI. The Cytoplasmic portion of the chain corresponds to 244-257; sequence SIMYREVVTQRLYR.

Its subcellular location is the endoplasmic reticulum membrane. The enzyme catalyses S-ubiquitinyl-[E2 ubiquitin-conjugating enzyme]-L-cysteine + [acceptor protein]-L-lysine = [E2 ubiquitin-conjugating enzyme]-L-cysteine + N(6)-ubiquitinyl-[acceptor protein]-L-lysine.. Its pathway is protein modification; protein ubiquitination. E3 ubiquitin-protein ligase that plays an essential role in stimulus-induced inositol 1,4,5-trisphosphate receptor (ITPR) ubiquitination and degradation via the endoplasmic reticulum-associated degradation (ERAD) pathway. Also involved in ITPR turnover in resting cells. The sequence is that of E3 ubiquitin-protein ligase RNF170 (rnf170) from Xenopus laevis (African clawed frog).